The sequence spans 251 residues: Triosephosphate isomerase (251 aa).

8 to 10 serves as a coordination point for substrate; the sequence is NWK. Catalysis depends on His-97, which acts as the Electrophile. The active-site Proton acceptor is Glu-170. Residues Gly-176, Ser-215, and 236 to 237 each bind substrate; that span reads GG.

Belongs to the triosephosphate isomerase family. As to quaternary structure, homodimer.

It localises to the cytoplasm. The enzyme catalyses D-glyceraldehyde 3-phosphate = dihydroxyacetone phosphate. Its pathway is carbohydrate biosynthesis; gluconeogenesis. It participates in carbohydrate degradation; glycolysis; D-glyceraldehyde 3-phosphate from glycerone phosphate: step 1/1. Functionally, involved in the gluconeogenesis. Catalyzes stereospecifically the conversion of dihydroxyacetone phosphate (DHAP) to D-glyceraldehyde-3-phosphate (G3P). The polypeptide is Triosephosphate isomerase (Nitratidesulfovibrio vulgaris (strain DSM 19637 / Miyazaki F) (Desulfovibrio vulgaris)).